Reading from the N-terminus, the 164-residue chain is UPF0262 protein Saro_0143 (164 aa).

The protein belongs to the UPF0262 family.

The chain is UPF0262 protein Saro_0143 from Novosphingobium aromaticivorans (strain ATCC 700278 / DSM 12444 / CCUG 56034 / CIP 105152 / NBRC 16084 / F199).